We begin with the raw amino-acid sequence, 459 residues long: MAP kinase-interacting serine/threonine-protein kinase 2 (459 aa).

The interval 28–67 (LDPAQHGDSDFSPQCEARPDMPSSQPIDIPDAKKRGRKKK) is disordered. Positions 60–66 (KKRGRKK) match the Nuclear localization signal motif. Residue S74 is modified to Phosphoserine. A Protein kinase domain is found at 84 to 368 (QLQEDVLGEG…AAQVLQHPWV (285 aa)). ATP-binding positions include 90–98 (LGEGAHARV) and K113. 160–162 (EKM) contributes to the staurosporine binding site. D205 serves as the catalytic Proton acceptor. A staurosporine-binding site is contributed by E209. 2 positions are modified to phosphothreonine: T244 and T249. Zn(2+)-binding residues include C299, C311, and C314. T379 is subject to Phosphothreonine. Phosphoserine occurs at positions 431 and 434. The MAP kinase binding signature appears at 438-442 (LAQRR). At S446 the chain carries Phosphoserine. Phosphothreonine is present on T450.

It belongs to the protein kinase superfamily. CAMK Ser/Thr protein kinase family. Monomer. Interacts with the C-terminal regions of EIF4G1 and EIF4G2; this interaction is promoted when MAPK pathways are repressed but repressed upon ERK proteins activation. Also binds to dephosphorylated MAPK3/ERK1 and MAPK1/ER2K. Interaction with phosphorylated MAPK3/ERK1 and MAPK1/ER2K protects it from dephosphorylation and inactivation. Interacts with ESR2 and EIF4E in the nucleus. It depends on Mg(2+) as a cofactor. Zn(2+) serves as cofactor. Dual phosphorylation of Thr-244 and Thr-249 activates the kinase. Phosphorylation of Thr-379 activates the kinase. Phosphorylated upon arsenic trioxide As(2)O(3) treatment. Phosphorylated by MAPK1/ERK2, MAPK11 and MAPK14. Dephosphorylated by PP2A.

The protein resides in the cytoplasm. It is found in the nucleus. The protein localises to the PML body. It carries out the reaction L-seryl-[protein] + ATP = O-phospho-L-seryl-[protein] + ADP + H(+). The catalysed reaction is L-threonyl-[protein] + ATP = O-phospho-L-threonyl-[protein] + ADP + H(+). With respect to regulation, inhibited by CGP57380 and staurosporine. Functionally, serine/threonine-protein kinase that phosphorylates SFPQ/PSF, HNRNPA1 and EIF4E. May play a role in the response to environmental stress and cytokines. Appears to regulate translation by phosphorylating EIF4E, thus increasing the affinity of this protein for the 7-methylguanosine-containing mRNA cap. Required for mediating PP2A-inhibition-induced EIF4E phosphorylation. Triggers EIF4E shuttling from cytoplasm to nucleus. Enhances the formation of EIF4F complex in pachytene spermatocytes, thus promoting mRNA translation during spermatogenesis. Displays a high basal kinase activity. Acts as a mediator of the suppressive effects of IFNgamma on hematopoiesis. Negative regulator for signals that control generation of arsenic trioxide As(2)O(3)-dependent apoptosis and anti-leukemic responses. Involved in anti-apoptotic signaling in response to serum withdrawal. The sequence is that of MAP kinase-interacting serine/threonine-protein kinase 2 (Mknk2) from Rattus norvegicus (Rat).